A 246-amino-acid chain; its full sequence is Mediator of RNA polymerase II transcription subunit 6 (246 aa).

Disordered regions lie at residues 165–186 (MKKK…RSTN) and 207–246 (EALE…ATTK). Basic and acidic residues-rich tracts occupy residues 166–184 (KKKE…EERS) and 208–224 (ALEK…KPEE).

It belongs to the Mediator complex subunit 6 family. Component of the Mediator complex. Interacts with let-19/mdt-13. Interacts with RNA polymerase II. Interacts with mdt-28.

Its subcellular location is the nucleus. Component of the Mediator complex, a coactivator involved in the regulated transcription of nearly all RNA polymerase II-dependent genes. Mediator functions as a bridge to convey information from gene-specific regulatory proteins to the basal RNA polymerase II transcription machinery. Mediator is recruited to promoters by direct interactions with regulatory proteins and serves as a scaffold for the assembly of a functional preinitiation complex with RNA polymerase II and the general transcription factors. This chain is Mediator of RNA polymerase II transcription subunit 6 (mdt-6), found in Caenorhabditis briggsae.